The sequence spans 189 residues: UPF0340 protein SAG0103 (189 aa).

Belongs to the UPF0340 family.

This Streptococcus agalactiae serotype V (strain ATCC BAA-611 / 2603 V/R) protein is UPF0340 protein SAG0103.